A 166-amino-acid polypeptide reads, in one-letter code: Large ribosomal subunit protein uL10 (166 aa).

It belongs to the universal ribosomal protein uL10 family. As to quaternary structure, part of the ribosomal stalk of the 50S ribosomal subunit. The N-terminus interacts with L11 and the large rRNA to form the base of the stalk. The C-terminus forms an elongated spine to which L12 dimers bind in a sequential fashion forming a multimeric L10(L12)X complex.

Forms part of the ribosomal stalk, playing a central role in the interaction of the ribosome with GTP-bound translation factors. This chain is Large ribosomal subunit protein uL10, found in Aeromonas salmonicida (strain A449).